The following is a 3054-amino-acid chain: Genome polyprotein (3054 aa).

In terms of domain architecture, Peptidase S30 spans 163 to 304 (FLPATSLSNV…FAVCHSMTHY (142 aa)). Active-site for P1 proteinase activity residues include histidine 214, aspartate 223, and serine 256. The Involved in interaction with stylet and aphid transmission motif lies at 358–361 (KITC). Positions 615 to 617 (PTK) match the Involved in virions binding and aphid transmission motif. Positions 641–763 (MYIANEGYCY…ESEMKTYNVG (123 aa)) constitute a Peptidase C6 domain. Catalysis depends on for helper component proteinase activity residues cysteine 649 and histidine 722. Residues 1234–1386 (EISHSPARDF…TQFPVKLKIE (153 aa)) enclose the Helicase ATP-binding domain. 1247–1254 (GAVGSGKS) contributes to the ATP binding site. The DECH box motif lies at 1336 to 1339 (DECH). One can recognise a Helicase C-terminal domain in the interval 1401–1564 (GANADVISCG…NLPVTTQSVS (164 aa)). The Nuclear localization signal signature appears at 1889 to 1896 (NKGKRKGT). Tyrosine 1911 is subject to O-(5'-phospho-RNA)-tyrosine. The region spanning 2038–2255 (GESLFKGPRD…VLWGGHKVFM (218 aa)) is the Peptidase C4 domain. Catalysis depends on for nuclear inclusion protein A activity residues histidine 2083, aspartate 2118, and cysteine 2188. In terms of domain architecture, RdRp catalytic spans 2521–2641 (WVYCDADGSQ…AIHPDKAERL (121 aa)). The tract at residues 2798-2827 (GADAGKKKDQKDDKVAEQASKDRDVNAGTS) is disordered. The span at 2801-2822 (AGKKKDQKDDKVAEQASKDRDV) shows a compositional bias: basic and acidic residues. Position 3038 is a phosphothreonine (threonine 3038).

It belongs to the potyviridae genome polyprotein family. In terms of assembly, interacts with host eIF4E protein (via cap-binding region); this interaction mediates the translation of the VPg-viral RNA conjugates. Part of a complex that comprises VPg, RNA, host EIF4E and EIF4G; this interaction mediates the translation of the VPg-viral RNA conjugates. Interaction is possible in susceptible hosts but impaired in resistant plants: the VPg of strain HAT interacts with tomato eIF4E1 and eIF4E2 as well as with Capsicum annuum eIF4E1 susceptible alleles pvr2(+), pvr2(3) and pvr2(9) but not with the resistant allele pvr2(2), the VPg of strain CAA10 interacts with C.annuum eIF4E1 susceptible alleles pvr2(+), pvr2(2), pvr2(3) and pvr2(9), the VPg of strain NW interacts at least with C.annuum eIF4E1. Homodimer; disulfide-linked. VPg is uridylylated by the polymerase and is covalently attached to the 5'-end of the genomic RNA. This uridylylated form acts as a nucleotide-peptide primer for the polymerase. Post-translationally, potyviral RNA is expressed as two polyproteins which undergo post-translational proteolytic processing. Genome polyprotein is processed by NIa-pro, P1 and HC-pro proteinases resulting in the production of at least ten individual proteins. P3N-PIPO polyprotein is cleaved by P1 and HC-pro proteinases resulting in the production of three individual proteins. The P1 proteinase and the HC-pro cleave only their respective C-termini autocatalytically. 6K1 is essential for proper proteolytic separation of P3 from CI.

Its subcellular location is the host cytoplasmic vesicle. The protein resides in the host nucleus. The protein localises to the virion. It carries out the reaction RNA(n) + a ribonucleoside 5'-triphosphate = RNA(n+1) + diphosphate. The catalysed reaction is Hydrolyzes glutaminyl bonds, and activity is further restricted by preferences for the amino acids in P6 - P1' that vary with the species of potyvirus, e.g. Glu-Xaa-Xaa-Tyr-Xaa-Gln-|-(Ser or Gly) for the enzyme from tobacco etch virus. The natural substrate is the viral polyprotein, but other proteins and oligopeptides containing the appropriate consensus sequence are also cleaved.. The enzyme catalyses Hydrolyzes a Gly-|-Gly bond at its own C-terminus, commonly in the sequence -Tyr-Xaa-Val-Gly-|-Gly, in the processing of the potyviral polyprotein.. Required for aphid transmission and also has proteolytic activity. Only cleaves a Gly-Gly dipeptide at its own C-terminus. Interacts with virions and aphid stylets. Acts as a suppressor of RNA-mediated gene silencing, also known as post-transcriptional gene silencing (PTGS), a mechanism of plant viral defense that limits the accumulation of viral RNAs. May have RNA-binding activity. Its function is as follows. Has helicase activity. It may be involved in replication. In terms of biological role, indispensable for virus replication. Reduces the abundance of host transcripts related to jasmonic acid biosynthesis therefore altering the host defenses. In order to increase its own stability, decreases host protein degradation pathways. Functionally, indispensable for virus replication. Mediates the cap-independent, EIF4E-dependent translation of viral genomic RNAs. Binds to the cap-binding site of host EIF4E and thus interferes with the host EIF4E-dependent mRNA export and translation. VPg-RNA directly binds EIF4E and is a template for transcription. Also forms trimeric complexes with EIF4E-EIF4G, which are templates for translation. Its function is as follows. Has RNA-binding and proteolytic activities. In terms of biological role, an RNA-dependent RNA polymerase that plays an essential role in the virus replication. Functionally, involved in aphid transmission, cell-to-cell and systemis movement, encapsidation of the viral RNA and in the regulation of viral RNA amplification. This Capsicum annuum (Capsicum pepper) protein is Genome polyprotein.